We begin with the raw amino-acid sequence, 250 residues long: Probable 2' cyclic ADP-D-ribose synthase TcpB (250 aa).

A disordered region spans residues 1 to 46 (MSKEKQAQSKAHKAQQAISSAKSLSTQKSKMSELERATRDGAAIGK). The tract at residues 1–117 (MSKEKQAQSK…TASATMEAEE (117 aa)) is necessary and sufficient for phosphoinositide binding. Residues 14 to 23 (AQQAISSAKS) show a composition bias toward low complexity. A compositionally biased stretch (basic and acidic residues) spans 30–39 (KMSELERATR). One can recognise a TIR domain in the interval 117–250 (EEYDFFISHA…EIAKELHSLI (134 aa)). Glu192 is a catalytic residue.

As to quaternary structure, homodimer; may also form oligomers. Interacts with host TIRAP. Interacts with host MYD88. Interaction with host MYD88 was not confirmed by another study. Interacts with host TLR4. Abolishes the interaction of host TIRAP with TLR4.

It is found in the secreted. It localises to the host cell membrane. It catalyses the reaction NAD(+) + H2O = ADP-D-ribose + nicotinamide + H(+). The enzyme catalyses NAD(+) = 2'cADPR + nicotinamide + H(+). Its function is as follows. Virulence factor that interferes with host Toll-like receptor 2 (TLR2) and TLR4 signaling, resulting in the reduction of dendritic cell maturation, inhibition of pro-inflammatory cytokine secretion and impaired NF-kappa-B activation in macrophages. Interferes with host TLR4 signaling by abolishing host TLR4-TIRAP interaction (but not host TIRAP-MYD88 interaction) and its downstream signaling. Inhibits host TLR 2 induced NF-kappa-B activation and TNF (tumor necrosis factor) secretion. Binds phosphoinositide (PtdIns) via its N-terminal domain. Has NAD(+) hydrolase (NADase) activity, catalyzes cleavage of NAD(+) into ADP-D-ribose (ADPR) and nicotinamide. Also generates a cyclization variant of cyclic ADPR (cADPR), termed v-cADPR (probably 2'cADPR). The protein is Probable 2' cyclic ADP-D-ribose synthase TcpB of Brucella melitensis biotype 1 (strain ATCC 23456 / CCUG 17765 / NCTC 10094 / 16M).